The following is a 533-amino-acid chain: Flavin-containing monooxygenase 5 (533 aa).

Residue Arg5 is modified to Dimethylated arginine. Residues 10 to 14, Glu33, and 41 to 42 each bind FAD; these read GGGVS and LW. Ser54 carries the phosphoserine modification. Tyr56 bears the Phosphotyrosine mark. Phosphoserine is present on Ser58. 62–63 contacts FAD; that stretch reads NT. 196-199 contributes to the NADP(+) binding site; sequence SGGD. Ser280 bears the Phosphoserine mark. The residue at position 284 (Thr284) is a Phosphothreonine. Ser401 bears the Phosphoserine mark. The chain crosses the membrane as a helical span at residues 513–533; that stretch reads TMTIGKFMLALAFFAIIIAYF.

The protein belongs to the FMO family. Requires FAD as cofactor. As to expression, expressed in fetal and adult liver.

It localises to the microsome membrane. Its subcellular location is the endoplasmic reticulum membrane. The catalysed reaction is N,N-dimethylaniline + NADPH + O2 + H(+) = N,N-dimethylaniline N-oxide + NADP(+) + H2O. The enzyme catalyses NADPH + O2 + H(+) = H2O2 + NADP(+). It carries out the reaction heptan-2-one + NADPH + O2 + H(+) = pentyl acetate + NADP(+) + H2O. It catalyses the reaction octan-3-one + NADPH + O2 + H(+) = pentyl propanoate + NADP(+) + H2O. The catalysed reaction is octan-3-one + NADPH + O2 + H(+) = ethyl hexanoate + NADP(+) + H2O. The enzyme catalyses hexan-3-one + NADPH + O2 + H(+) = ethyl butanoate + NADP(+) + H2O. It carries out the reaction hexan-3-one + NADPH + O2 + H(+) = propyl propanoate + NADP(+) + H2O. It catalyses the reaction heptan-4-one + NADPH + O2 + H(+) = propyl butanoate + NADP(+) + H2O. The catalysed reaction is (2E)-geranial + NADPH + O2 + H(+) = (1E)-2,6-dimethylhepta-1,5-dien-1-yl formate + NADP(+) + H2O. The enzyme catalyses sulcatone + NADPH + O2 + H(+) = 4-methylpent-3-en-1-yl acetate + NADP(+) + H2O. In terms of biological role, acts as a Baeyer-Villiger monooxygenase on a broad range of substrates. Catalyzes the insertion of an oxygen atom into a carbon-carbon bond adjacent to a carbonyl, which converts ketones to esters. Active on diverse carbonyl compounds, whereas soft nucleophiles are mostly non- or poorly reactive. In contrast with other forms of FMO it is non- or poorly active on 'classical' substrates such as drugs, pesticides, and dietary components containing soft nucleophilic heteroatoms. Able to oxidize drug molecules bearing a carbonyl group on an aliphatic chain, such as nabumetone and pentoxifylline. Also, in the absence of substrates, shows slow but yet significant NADPH oxidase activity. Acts as a positive modulator of cholesterol biosynthesis as well as glucose homeostasis, promoting metabolic aging via pleiotropic effects. This Homo sapiens (Human) protein is Flavin-containing monooxygenase 5.